Consider the following 208-residue polypeptide: TnpB-like protein MJ0012 (208 aa).

Zn(2+)-binding residues include Cys-83, Cys-86, Cys-100, and Cys-103.

Belongs to the transposase 35 family.

This Methanocaldococcus jannaschii (strain ATCC 43067 / DSM 2661 / JAL-1 / JCM 10045 / NBRC 100440) (Methanococcus jannaschii) protein is TnpB-like protein MJ0012.